The following is a 322-amino-acid chain: 8-oxo-(d)GTP phosphatase (322 aa).

Residues 1 to 21 (MMPVDDLQEIPLSKDTTEKSK) are disordered. Residues 22-156 (HTVRAAGAVL…DDRKVLRRFV (135 aa)) form the Nudix hydrolase domain. Substrate-binding positions include 55 to 58 (RPRY), Asp-60, and 65 to 67 (KGK). Residues Lys-65, Glu-81, and Glu-85 each coordinate Mg(2+). The Nudix box signature appears at 66 to 87 (GKLDQGETEPVAAAREIHEETG). Substrate contacts are provided by Tyr-101, Lys-108, Glu-127, and Tyr-145. Glu-127 contributes to the Mg(2+) binding site.

Belongs to the Nudix hydrolase family. As to quaternary structure, forms head-to-tail homodimers. Requires Mg(2+) as cofactor.

It carries out the reaction 8-oxo-dGTP + H2O = 8-oxo-dGDP + phosphate + H(+). The catalysed reaction is 8-oxo-GTP + H2O = 8-oxo-GDP + phosphate + H(+). It catalyses the reaction 8-oxo-dGDP + H2O = 8-oxo-dGMP + phosphate + H(+). The enzyme catalyses 8-oxo-GDP + H2O = 8-oxo-GMP + phosphate + H(+). It carries out the reaction P(1),P(6)-bis(5'-adenosyl) hexaphosphate + H2O = 2 ATP + 2 H(+). The catalysed reaction is P(1),P(5)-bis(5'-adenosyl) pentaphosphate + H2O = ADP + ATP + 2 H(+). It catalyses the reaction P(1),P(4)-bis(5'-adenosyl) tetraphosphate + H2O = AMP + ATP + 2 H(+). With respect to regulation, ap4A hydrolysis is inhibited by fluoride ions. Its function is as follows. Catalyzes the conversion of 8-oxo-dGTP to 8-oxo-dGDP, and 8-oxo-GTP to 8-oxo-GDP. At high enzyme concentrations, can also catalyze the conversion of 8-oxo-dGDP to 8-oxo-dGMP, and 8-oxo-GDP to 8-oxo-GMP. In addition, catalyzes the hydrolysis of the diadenosine polyphosphates diadenosine hexaphosphate (Ap6A), diadenosine pentaphosphate (Ap5A) and diadenosine tetraphosphate (Ap4A). In Mycolicibacterium smegmatis (strain ATCC 700084 / mc(2)155) (Mycobacterium smegmatis), this protein is 8-oxo-(d)GTP phosphatase.